The primary structure comprises 336 residues: uncharacterized protein (336 aa).

The disordered stretch occupies residues 162–195; sequence ARGLPVHSSFKQNNSSQTSSNKGTTTVAAGSGSD. The segment covering 169-187 has biased composition (low complexity); sequence SSFKQNNSSQTSSNKGTTT.

Belongs to the AHA1 family.

This is an uncharacterized protein from Schizosaccharomyces pombe (strain 972 / ATCC 24843) (Fission yeast).